Reading from the N-terminus, the 98-residue chain is C-X-C motif chemokine 10 (98 aa).

The first 21 residues, 1-21 (MNPSAAVVLCLVLLSLSGTQG), serve as a signal peptide directing secretion. Position 26 is a citrulline (arginine 26). 2 disulfide bridges follow: cysteine 30-cysteine 57 and cysteine 32-cysteine 74.

The protein belongs to the intercrine alpha (chemokine CxC) family. As to quaternary structure, monomer, dimer, and tetramer. Interacts with CXCR3 (via N-terminus). As to expression, in the central nervous system, CXCL10 is predominantly localized to activated neurons. Expressed in both microglia and astrocytes.

The protein localises to the secreted. In terms of biological role, pro-inflammatory cytokine that is involved in a wide variety of processes such as chemotaxis, differentiation, and activation of peripheral immune cells, regulation of cell growth, apoptosis and modulation of angiostatic effects. Plays thereby an important role during viral infections by stimulating the activation and migration of immune cells to the infected sites. Mechanistically, binding of CXCL10 to the CXCR3 receptor activates G protein-mediated signaling and results in downstream activation of phospholipase C-dependent pathway, an increase in intracellular calcium production and actin reorganization. In turn, recruitment of activated Th1 lymphocytes occurs at sites of inflammation. Activation of the CXCL10/CXCR3 axis also plays an important role in neurons in response to brain injury for activating microglia, the resident macrophage population of the central nervous system, and directing them to the lesion site. This recruitment is an essential element for neuronal reorganization. The chain is C-X-C motif chemokine 10 (Cxcl10) from Rattus norvegicus (Rat).